The chain runs to 231 residues: MQPRVILTDIEGTTSSISFVKNVLFPYARKALPAFVAEHGQQPEVRRWLDAVATEIGGACQDSLVAETLQGWIDQDRKHTALKALQGLIWDEGYRRGDYTAHFYPEVAPVLKGWHASGLPLYVYSSGSVPAQKLFFGFSDAGDLSPLVSGWFDTEIGGKREADSYRRIVQAIDVPAGEILFLSDVVEELDAAREAGLQTRLIDRLDDYPLPRTGQAANGHERVENFQQIQL.

Belongs to the HAD-like hydrolase superfamily. MasA/MtnC family. In terms of assembly, monomer. Requires Mg(2+) as cofactor.

The enzyme catalyses 5-methylsulfanyl-2,3-dioxopentyl phosphate + H2O = 1,2-dihydroxy-5-(methylsulfanyl)pent-1-en-3-one + phosphate. It participates in amino-acid biosynthesis; L-methionine biosynthesis via salvage pathway; L-methionine from S-methyl-5-thio-alpha-D-ribose 1-phosphate: step 3/6. It functions in the pathway amino-acid biosynthesis; L-methionine biosynthesis via salvage pathway; L-methionine from S-methyl-5-thio-alpha-D-ribose 1-phosphate: step 4/6. Its function is as follows. Bifunctional enzyme that catalyzes the enolization of 2,3-diketo-5-methylthiopentyl-1-phosphate (DK-MTP-1-P) into the intermediate 2-hydroxy-3-keto-5-methylthiopentenyl-1-phosphate (HK-MTPenyl-1-P), which is then dephosphorylated to form the acireductone 1,2-dihydroxy-3-keto-5-methylthiopentene (DHK-MTPene). In Stenotrophomonas maltophilia (strain R551-3), this protein is Enolase-phosphatase E1.